We begin with the raw amino-acid sequence, 329 residues long: Phenylalanine--tRNA ligase alpha subunit (329 aa).

Position 254 (Glu-254) interacts with Mg(2+).

Belongs to the class-II aminoacyl-tRNA synthetase family. Phe-tRNA synthetase alpha subunit type 1 subfamily. As to quaternary structure, tetramer of two alpha and two beta subunits. Mg(2+) is required as a cofactor.

Its subcellular location is the cytoplasm. It catalyses the reaction tRNA(Phe) + L-phenylalanine + ATP = L-phenylalanyl-tRNA(Phe) + AMP + diphosphate + H(+). The sequence is that of Phenylalanine--tRNA ligase alpha subunit from Actinobacillus succinogenes (strain ATCC 55618 / DSM 22257 / CCUG 43843 / 130Z).